Here is a 163-residue protein sequence, read N- to C-terminus: NADH-quinone oxidoreductase subunit I 1 (163 aa).

4Fe-4S ferredoxin-type domains lie at L53–G83 and V94–N123. The [4Fe-4S] cluster site is built by C63, C66, C69, C73, C103, C106, C109, and C113.

The protein belongs to the complex I 23 kDa subunit family. NDH-1 is composed of 14 different subunits. Subunits NuoA, H, J, K, L, M, N constitute the membrane sector of the complex. Requires [4Fe-4S] cluster as cofactor.

The protein localises to the cell inner membrane. The enzyme catalyses a quinone + NADH + 5 H(+)(in) = a quinol + NAD(+) + 4 H(+)(out). NDH-1 shuttles electrons from NADH, via FMN and iron-sulfur (Fe-S) centers, to quinones in the respiratory chain. The immediate electron acceptor for the enzyme in this species is believed to be ubiquinone. Couples the redox reaction to proton translocation (for every two electrons transferred, four hydrogen ions are translocated across the cytoplasmic membrane), and thus conserves the redox energy in a proton gradient. The polypeptide is NADH-quinone oxidoreductase subunit I 1 (Rhizobium etli (strain ATCC 51251 / DSM 11541 / JCM 21823 / NBRC 15573 / CFN 42)).